An 828-amino-acid chain; its full sequence is Glycerol-3-phosphate acyltransferase (828 aa).

Residues 310-315 (HRSHID) carry the HXXXXD motif motif.

The protein belongs to the GPAT/DAPAT family.

It localises to the cell inner membrane. The catalysed reaction is sn-glycerol 3-phosphate + an acyl-CoA = a 1-acyl-sn-glycero-3-phosphate + CoA. The protein operates within phospholipid metabolism; CDP-diacylglycerol biosynthesis; CDP-diacylglycerol from sn-glycerol 3-phosphate: step 1/3. This Pseudomonas putida (strain ATCC 47054 / DSM 6125 / CFBP 8728 / NCIMB 11950 / KT2440) protein is Glycerol-3-phosphate acyltransferase.